The sequence spans 271 residues: GPN-loop GTPase 3 (271 aa).

Residue 13–18 participates in GTP binding; the sequence is GAGKST. The Gly-Pro-Asn (GPN)-loop; involved in dimer interface signature appears at 70–72; sequence GPN. 173–176 is a GTP binding site; it reads SKVD.

It belongs to the GPN-loop GTPase family. As to quaternary structure, heterodimers with GPN1 or GPN2. Binds to RNA polymerase II (RNAPII).

Functionally, small GTPase required for proper nuclear import of RNA polymerase II and III (RNAPII and RNAPIII). May act at an RNAP assembly step prior to nuclear import. This chain is GPN-loop GTPase 3, found in Eremothecium gossypii (strain ATCC 10895 / CBS 109.51 / FGSC 9923 / NRRL Y-1056) (Yeast).